The following is a 1110-amino-acid chain: RNA2 polyprotein (1110 aa).

This sequence belongs to the nepoviruses RNA2 polyprotein family. Specific enzymatic cleavages in vivo by the P1 encoded 3C-like protease yield mature proteins.

The protein localises to the host cell junction. The protein resides in the host plasmodesma. It is found in the host cytoplasm. It localises to the host nucleus. Its subcellular location is the virion. Implicated in RNA2 replication. Could also be required for nematode transmission of the virus. In terms of biological role, transports viral genome to neighboring plant cells directly through plasmosdesmata, without any budding. The movement protein allows efficient cell to cell propagation, by bypassing the host cell wall barrier. Acts by forming a tubular structure at the host plasmodesmata, enlarging it enough to allow free passage of virion capsids. The chain is RNA2 polyprotein from Vitis vinifera (Grape).